A 156-amino-acid polypeptide reads, in one-letter code: Small ribosomal subunit protein uS7 (156 aa).

Belongs to the universal ribosomal protein uS7 family. Part of the 30S ribosomal subunit. Contacts proteins S9 and S11.

One of the primary rRNA binding proteins, it binds directly to 16S rRNA where it nucleates assembly of the head domain of the 30S subunit. Is located at the subunit interface close to the decoding center, probably blocks exit of the E-site tRNA. The chain is Small ribosomal subunit protein uS7 from Mesorhizobium japonicum (strain LMG 29417 / CECT 9101 / MAFF 303099) (Mesorhizobium loti (strain MAFF 303099)).